The chain runs to 372 residues: Ribosomal RNA small subunit methyltransferase H (372 aa).

S-adenosyl-L-methionine contacts are provided by residues 78 to 80 (GGH), Asp-97, Tyr-124, Asp-148, and Gln-155.

The protein belongs to the methyltransferase superfamily. RsmH family.

The protein resides in the cytoplasm. The catalysed reaction is cytidine(1402) in 16S rRNA + S-adenosyl-L-methionine = N(4)-methylcytidine(1402) in 16S rRNA + S-adenosyl-L-homocysteine + H(+). In terms of biological role, specifically methylates the N4 position of cytidine in position 1402 (C1402) of 16S rRNA. The chain is Ribosomal RNA small subunit methyltransferase H from Mycobacterium leprae (strain Br4923).